A 368-amino-acid polypeptide reads, in one-letter code: Transcription factor bHLH30 (368 aa).

Positions 3-30 (AKKEEEEEEEEDSSEAMNNIQNYQNDLF) form a coiled coil. In terms of domain architecture, bHLH spans 173–222 (AASKSHSEAERRRRERINNHLAKLRSILPNTTKTDKASLLAEVIQHVKEL). Positions 333-368 (KSNVEESSSSGNAKRQRMSSHNTITIVEQQQQYNQR) are disordered. Residues 337–368 (EESSSSGNAKRQRMSSHNTITIVEQQQQYNQR) are compositionally biased toward polar residues.

Homodimer. Interacts with LHW.

The protein localises to the nucleus. The protein is Transcription factor bHLH30 (BHLH30) of Arabidopsis thaliana (Mouse-ear cress).